The sequence spans 923 residues: Transportin-3 (923 aa).

At M1 the chain carries N-acetylmethionine. The residue at position 74 (S74) is a Phosphoserine. Residue T896 is modified to Phosphothreonine.

In terms of assembly, interacts with (GTP-bound) Ran. Interacts with (phosphorylated) SFRS1 and SFRS2; leading to their nuclear import. Interacts with NUP62. Interacts with RBM4. Interacts with CPSF6, promoting its nuclear import. As to quaternary structure, (Microbial infection) Interacts with the HIV-1 pre-integration complex (PIC), which is composed of viral genome, matrix protein, Vpr and integrase. Interacts with HIV-1 integrase protein; the interaction is direct. As to expression, expressed in skeletal muscle.

Its subcellular location is the nucleus envelope. It localises to the cytoplasm. In terms of biological role, importin, which transports target proteins into the nucleus. Specifically mediates the nuclear import of splicing factor serine/arginine (SR) proteins, such as RBM4, SFRS1 and SFRS2, by recognizing phosphorylated SR domains. Also mediates the nuclear import of serine/arginine (SR) protein CPSF6, independently of CPSF6 phosphorylation. The nuclear import process is regulated by the small GTPase Ran that partitions between cytoplasm and nucleus in the predominantly GDP- and GTP-bound form, respectively. Importin associates with target cargo proteins in the cytoplasm, and the competitive binding of GTP-bound Ran induces the release of cargos in the nucleus. (Microbial infection) Involved in immunodeficiency virus (HIV-1) infection by importing the pre-integration complex (PIC) into the nucleus. Required for a nuclear maturation step of HIV-1 prior to integration. In Homo sapiens (Human), this protein is Transportin-3.